The following is a 417-amino-acid chain: Actin-related protein 10 (417 aa).

It belongs to the actin family. Subunit of dynactin, a multiprotein complex part of a tripartite complex with dynein and a adapter, such as BICDL1, BICD2 or HOOK3. The dynactin complex is built around ACTR1A/ACTB filament and consists of an actin-related filament composed of a shoulder domain, a pointed end and a barbed end. Its length is defined by its flexible shoulder domain. The soulder is composed of 2 DCTN1 subunits, 4 DCTN2 and 2 DCTN3. The 4 DCNT2 (via N-terminus) bind the ACTR1A filament and act as molecular rulers to determine the length. The pointed end is important for binding dynein-dynactin cargo adapters. Consists of 4 subunits: ACTR10, DCNT4, DCTN5 and DCTN6. The barbed end is composed of a CAPZA1:CAPZB heterodimers, which binds ACTR1A/ACTB filament and dynactin and stabilizes dynactin.

It is found in the cytoplasm. It localises to the cytoskeleton. In terms of biological role, part of the dynactin complex that activates the molecular motor dynein for ultra-processive transport along microtubules. The sequence is that of Actin-related protein 10 (ACTR10) from Homo sapiens (Human).